A 554-amino-acid polypeptide reads, in one-letter code: Glutamine--tRNA ligase (554 aa).

Positions 34-44 (PEPNGYLHIGH) match the 'HIGH' region motif. ATP-binding positions include 35–37 (EPN) and 41–47 (HIGHAKS). Asp67 and Tyr212 together coordinate L-glutamine. ATP is bound by residues Thr231, 261–262 (RL), and 269–271 (MSK). Positions 268–272 (VMSKR) match the 'KMSKS' region motif. Residues 317–324 (TKQDNTIE) are interaction with tRNA.

Belongs to the class-I aminoacyl-tRNA synthetase family. As to quaternary structure, monomer.

It localises to the cytoplasm. The enzyme catalyses tRNA(Gln) + L-glutamine + ATP = L-glutaminyl-tRNA(Gln) + AMP + diphosphate. The protein is Glutamine--tRNA ligase of Escherichia coli O7:K1 (strain IAI39 / ExPEC).